The sequence spans 932 residues: Protocadherin gamma-A9 (932 aa).

Positions 1 to 28 (MAAPTKCQLRGRLVLLCSLLGMLWEARA) are cleaved as a signal peptide. Cadherin domains lie at 29–133 (SQIR…APKF), 134–242 (QAES…APVF), 243–347 (AQRI…RPEV), 348–452 (TITS…PPAF), 453–562 (SQAS…APEI), and 570–683 (DGST…IPAD). Residues 29–692 (SQIRYSVPEE…DLEASDLTLY (664 aa)) lie on the Extracellular side of the membrane. 2 N-linked (GlcNAc...) asparagine glycosylation sites follow: Asn47 and Asn127. Residues Asn389, Asn419, and Asn545 are each glycosylated (N-linked (GlcNAc...) asparagine). The chain crosses the membrane as a helical span at residues 693-713 (LVVAVAVVSCVFLTFVITLLA). At 714–932 (LRLRHWHSSH…KKKSGKKEKK (219 aa)) the chain is on the cytoplasmic side. Disordered regions lie at residues 803–841 (DTPL…WPNN) and 902–932 (ATLT…KEKK). The span at 816–841 (WRFSQAQRPGTSGSQNGDDTGTWPNN) shows a compositional bias: polar residues. Residues 922–932 (NKKKSGKKEKK) show a composition bias toward basic residues.

It localises to the cell membrane. Potential calcium-dependent cell-adhesion protein. May be involved in the establishment and maintenance of specific neuronal connections in the brain. The chain is Protocadherin gamma-A9 (PCDHGA9) from Pan troglodytes (Chimpanzee).